A 698-amino-acid polypeptide reads, in one-letter code: MLDHTRAPELNIDLDLHASNSPKGSMKGNQFKEQDPCPPQPMQGLGKGDKREEQGLGPEPSAPRQPTEEEEALIEFHRSYRELFQFFCNNTTIHGAIRLVCSKHNRMKTAFWAVLWLCTFGMMYWQFALLFEEYLSYPVSLNINLNSDKLVFPAVTVCTLNPYRYTEIKEELEELDRITEQTLFDLYKYNSSYTRQAGARRRSSRDLLGAFPHPLQRLRTPPPPYSGRTARSGSSSVRDNNPQVDRKDWKIGFQLCNQNKSDCFYQTYSSGVDAVREWYRFHYINILSRLSDTSPALEEEALGNFIFTCRFNQAPCNQANYSKFHHPMYGNCYTFNDKNNSNLWMSSMPGVNNGLSLTLRTEQNDFIPLLSTVTGARVMVHGQDEPAFMDDGGFNLRPGVETSISMRKEALDSLGGNYGDCTENGSDVPVKNLYPSKYTQQVCIHSCFQENMIKKCGCAYIFYPKPKGVEFCDYRKQSSWGYCYYKLQGAFSLDSLGCFSKCRKPCSVINYKLSAGYSRWPSVKSQDWIFEMLSLQNNYTINNKRNGVAKLNIFFKELNYKTNSESPSVTMVSLLSNLGSQWSLWFGSSVLSVVEMAELIFDLLVITLLMLLRRFRSRYWSPGRGARGAREVASTPASSFPSRFCPHPTSPPPSLPQQGMTPPLALTAPPPAYATLGPSAPPLDSAAPDCSACALAAL.

A disordered region spans residues 1–70 (MLDHTRAPEL…SAPRQPTEEE (70 aa)). Over 1–110 (MLDHTRAPEL…CSKHNRMKTA (110 aa)) the chain is Cytoplasmic. The chain crosses the membrane as a helical span at residues 111–131 (FWAVLWLCTFGMMYWQFALLF). Over 132–589 (EEYLSYPVSL…SQWSLWFGSS (458 aa)) the chain is Extracellular. Intrachain disulfides connect C158–C332, C256–C263, and C309–C316. N-linked (GlcNAc...) asparagine glycosylation is present at N190. The tract at residues 200–270 (RRRSSRDLLG…SDCFYQTYSS (71 aa)) is gating release of inhibition by proteolysis (GRIP); protease-sensitive region that is responsible for the proteolytic activation of the channel. Residues 213–243 (HPLQRLRTPPPPYSGRTARSGSSSVRDNNPQ) are disordered. Polar residues predominate over residues 229 to 243 (TARSGSSSVRDNNPQ). N-linked (GlcNAc...) asparagine glycosylation is present at N259. N320, N339, and N424 each carry an N-linked (GlcNAc...) asparagine glycan. Intrachain disulfides connect C421-C506, C443-C483, C443-C502, C447-C498, C456-C483, C456-C506, and C458-C472. N-linked (GlcNAc...) asparagine glycosylation is present at N538. Residues 590-610 (VLSVVEMAELIFDLLVITLLM) form a helical membrane-spanning segment. The Cytoplasmic segment spans residues 611–698 (LLRRFRSRYW…DCSACALAAL (88 aa)). A disordered region spans residues 637–663 (ASSFPSRFCPHPTSPPPSLPQQGMTPP). The PY motif; recruits WW domain-containing proteins and is thereby required for ubiquitination and inhibition of the channel by NEDD4 and NEDD4L signature appears at 669–673 (PPPAY).

Belongs to the amiloride-sensitive sodium channel (TC 1.A.6) family. SCNN1A subfamily. Heterotrimer; containing an alpha/SCNN1A, a beta/SCNN1B and a gamma/SCNN1G subunit. Interacts with WWP1 (via WW domains). Interacts with WWP2 (via WW domains); inhibits the channel. Interacts with BPIFA1; the interaction is indirect via SCNN1B and inhibits the proteolytic processing of SCNN1A and SCNN1G and the activation of ENaC. Interacts with the full-length immature form of PCSK9 (pro-PCSK9). In terms of processing, ubiquitinated. Can be ubiquitinated at multiple sites and undergo monoubiquitination and polyubiquitination. Ubiquitination by NEDD4 or NEDD4L inhibits the ENaC channel through endocytosis, intracellular retention and degradation of its individual subunits. N-glycosylated. Post-translationally, ENaC is activated through the proteolytic maturation of its subunits. Furin cleaves the SCNN1A subunit, which results in a stepwise increase in the open probability of the channel due to the release of an inhibitory tract. BPIFA1, which is recruited by the SCNN1B subunit, prevents the proteolytic activation of ENaC. Detected in kidney, lung and testis (at protein level). In the testis, detected within the seminiferous tubules but not in the interstitial cells (at protein level).

It localises to the apical cell membrane. The protein resides in the cell projection. It is found in the cilium. The protein localises to the cytoplasmic granule. Its subcellular location is the cytoplasm. It localises to the cytoplasmic vesicle. The protein resides in the secretory vesicle. It is found in the acrosome. The protein localises to the flagellum. The enzyme catalyses Na(+)(in) = Na(+)(out). Originally identified and characterized by its inhibition by the diuretic drug amiloride. Functionally, this is one of the three pore-forming subunits of the heterotrimeric epithelial sodium channel (ENaC), a critical regulator of sodium balance and fluid homeostasis. ENaC operates in epithelial tissues, where it mediates the electrodiffusion of sodium ions from extracellular fluid through the apical membrane of cells, with water following osmotically. It plays a key role in maintaining sodium homeostasis through electrogenic sodium reabsorption in the kidneys. Additionally, ENaC is essential for airway surface liquid homeostasis, which is crucial for proper mucus clearance. The polypeptide is Epithelial sodium channel subunit alpha (Rattus norvegicus (Rat)).